The chain runs to 333 residues: Mitochondrial fission regulator 1 (333 aa).

The transit peptide at 1 to 48 (MLGWIKRLIRMVFQQVGVSMQSVLWSRKPYGSSRSIVRKIGTNLSLIQ) directs the protein to the mitochondrion. Residue Ser-119 is modified to Phosphoserine. Residues 137 to 169 (NEEALQKICALENELAALRAQIAKIVTQQEQQN) adopt a coiled-coil conformation. Disordered stretches follow at residues 177 to 198 (STTF…PPPA) and 288 to 315 (SDSQ…FGPH). The tract at residues 179–304 (TFGTIPPHPP…EKGIPKSESE (126 aa)) is necessary and sufficient to promote mitochondrial fission. Positions 184 to 198 (PPHPPPPPPPLPPPA) are enriched in pro residues. Over residues 288–307 (SDSQDEVEKGIPKSESEATS) the composition is skewed to basic and acidic residues.

The protein belongs to the MTFR1 family.

The protein localises to the mitochondrion. May play a role in mitochondrial aerobic respiration. May also regulate mitochondrial organization and fission. The polypeptide is Mitochondrial fission regulator 1 (MTFR1) (Homo sapiens (Human)).